A 326-amino-acid polypeptide reads, in one-letter code: DNA-directed RNA polymerase subunit alpha (326 aa).

Positions 1 to 232 (MQGSARDFLK…EQLSSFVELE (232 aa)) are alpha N-terminal domain (alpha-NTD). The alpha C-terminal domain (alpha-CTD) stretch occupies residues 246-326 (FDPQLLAAVD…NWPPVDLMSE (81 aa)).

This sequence belongs to the RNA polymerase alpha chain family. Homodimer. The RNAP catalytic core consists of 2 alpha, 1 beta, 1 beta' and 1 omega subunit. When a sigma factor is associated with the core the holoenzyme is formed, which can initiate transcription.

It catalyses the reaction RNA(n) + a ribonucleoside 5'-triphosphate = RNA(n+1) + diphosphate. DNA-dependent RNA polymerase catalyzes the transcription of DNA into RNA using the four ribonucleoside triphosphates as substrates. In Vesicomyosocius okutanii subsp. Calyptogena okutanii (strain HA), this protein is DNA-directed RNA polymerase subunit alpha.